We begin with the raw amino-acid sequence, 421 residues long: Testin (421 aa).

The PET domain maps to 92–199 (MILTNPVAAK…GDVKLPCEMD (108 aa)). The interval 133 to 164 (EKQPVAGSEGAQYRKKQLAKQLPAHDQDPSKC) is disordered. Over residues 155 to 164 (PAHDQDPSKC) the composition is skewed to basic and acidic residues. 3 LIM zinc-binding domains span residues 234-297 (YSCY…CDSE), 299-359 (PRCA…NHAV), and 362-421 (QGCH…KMMS).

It belongs to the prickle / espinas / testin family. In terms of assembly, interacts via LIM domain 1 with ZYX. Interacts (via LIM domain 3) with ENAH and VASP. Interacts with ALKBH4, talin, actin, alpha-actinin, GRIP1 and PXN. Interacts (via LIM domain 2) with ACTL7A (via N-terminus). Heterodimer with ACTL7A; the heterodimer interacts with ENAH to form a heterotrimer.

The protein localises to the cytoplasm. It localises to the cell junction. The protein resides in the focal adhesion. Functionally, scaffold protein that may play a role in cell adhesion, cell spreading and in the reorganization of the actin cytoskeleton. Plays a role in the regulation of cell proliferation. May act as a tumor suppressor. This is Testin (TES) from Ateles geoffroyi (Black-handed spider monkey).